The sequence spans 274 residues: Nitrogenase iron protein (274 aa).

An ATP-binding site is contributed by 8-15 (GKGGIGKS). Residue C94 participates in [4Fe-4S] cluster binding. Position 97 is an ADP-ribosylarginine; by dinitrogenase reductase ADP-ribosyltransferase (R97). Position 131 (C131) interacts with [4Fe-4S] cluster.

It belongs to the NifH/BchL/ChlL family. In terms of assembly, homodimer. It depends on [4Fe-4S] cluster as a cofactor. In terms of processing, the reversible ADP-ribosylation of Arg-97 inactivates the nitrogenase reductase and regulates nitrogenase activity.

It catalyses the reaction N2 + 8 reduced [2Fe-2S]-[ferredoxin] + 16 ATP + 16 H2O = H2 + 8 oxidized [2Fe-2S]-[ferredoxin] + 2 NH4(+) + 16 ADP + 16 phosphate + 6 H(+). Its function is as follows. The key enzymatic reactions in nitrogen fixation are catalyzed by the nitrogenase complex, which has 2 components: the iron protein and the molybdenum-iron protein. The protein is Nitrogenase iron protein of Chlorobium luteolum (strain DSM 273 / BCRC 81028 / 2530) (Pelodictyon luteolum).